Reading from the N-terminus, the 277-residue chain is NADPH-dependent 7-cyano-7-deazaguanine reductase (277 aa).

Residue 83 to 85 (VES) participates in substrate binding. 85–86 (SK) provides a ligand contact to NADPH. C184 (thioimide intermediate) is an active-site residue. Residue D191 is the Proton donor of the active site. Position 223-224 (223-224 (HE)) interacts with substrate. Residue 252-253 (RG) participates in NADPH binding.

Belongs to the GTP cyclohydrolase I family. QueF type 2 subfamily. In terms of assembly, homodimer.

It is found in the cytoplasm. The enzyme catalyses 7-aminomethyl-7-carbaguanine + 2 NADP(+) = 7-cyano-7-deazaguanine + 2 NADPH + 3 H(+). It participates in tRNA modification; tRNA-queuosine biosynthesis. Catalyzes the NADPH-dependent reduction of 7-cyano-7-deazaguanine (preQ0) to 7-aminomethyl-7-deazaguanine (preQ1). The chain is NADPH-dependent 7-cyano-7-deazaguanine reductase from Cupriavidus taiwanensis (strain DSM 17343 / BCRC 17206 / CCUG 44338 / CIP 107171 / LMG 19424 / R1) (Ralstonia taiwanensis (strain LMG 19424)).